The following is a 443-amino-acid chain: MDFPCLWLGLLLPLVAALDFNYHRQEGMEAFLKTVAQNYSSVTHLHSIGKSVKGRNLWVLVVGRFPKEHRIGIPEFKYVANMHGDETVGRELLLHLIDYLVTSDGKDPEITNLINSTRIHIMPSMNPDGFEAVKKPDCYYSIGRENYNQYDLNRNFPDAFEYNNVSRQPETVAVMKWLKTETFVLSANLHGGALVASYPFDNGVQATGALYSRSLTPDDDVFQYLAHTYASRNPNMKKGDECKNKMNFPNGVTNGYSWYPLQGGMQDYNYIWAQCFEITLELSCCKYPREEKLPSFWNNNKASLIEYIKQVHLGVKGQVFDQNGNPLPNVIVEVQDRKHICPYRTNKYGEYYLLLLPGSYIINVTVPGHDPHITKVIIPEKSQNFSALKKDILLPFQGQLDSIPVSNPSCPMIPLYRNLPDHSAATKPSLFLFLVSLLHIFFK.

Positions methionine 1 to alanine 17 are cleaved as a signal peptide. The 291-residue stretch at asparagine 21–valine 311 folds into the Peptidase M14 domain. N-linked (GlcNAc...) asparagine glycosylation is present at asparagine 38. Positions 83 and 86 each coordinate Zn(2+). Asparagine 115 and asparagine 164 each carry an N-linked (GlcNAc...) asparagine glycan. 3 disulfides stabilise this stretch: cysteine 138/cysteine 285, cysteine 242/cysteine 284, and cysteine 341/cysteine 410. Residue histidine 190 participates in Zn(2+) binding. Glutamate 281 functions as the Proton donor/acceptor in the catalytic mechanism. Residues asparagine 363 and asparagine 384 are each glycosylated (N-linked (GlcNAc...) asparagine). Serine 423 is lipidated: GPI-anchor amidated serine. A propeptide spans alanine 424 to lysine 443 (removed in mature form).

It belongs to the peptidase M14 family. Zn(2+) serves as cofactor.

It localises to the cell membrane. The enzyme catalyses Cleavage of C-terminal arginine or lysine residues from polypeptides.. Inhibited by O-phenanthroline and MGTA and activated by cobalt. Specifically removes C-terminal basic residues (Arg or Lys) from peptides and proteins. It is believed to play important roles in the control of peptide hormone and growth factor activity at the cell surface, and in the membrane-localized degradation of extracellular proteins. This Homo sapiens (Human) protein is Carboxypeptidase M (CPM).